Reading from the N-terminus, the 604-residue chain is Glutamyl-tRNA(Gln) amidotransferase subunit B, mitochondrial (604 aa).

A mitochondrion-targeting transit peptide spans 1–48 (MIRQCLSRRGAYSRYRLAARGVELAEPFHHQSSRPQGRRNWSSSPRCS). Residues 28–57 (FHHQSSRPQGRRNWSSSPRCSLDIRTDTPR) are disordered. Over residues 33 to 46 (SRPQGRRNWSSSPR) the composition is skewed to polar residues.

Belongs to the GatB/GatE family. GatB subfamily. In terms of assembly, subunit of the heterotrimeric GatCAB amidotransferase (AdT) complex, composed of A, B and C subunits.

It is found in the mitochondrion. It catalyses the reaction L-glutamyl-tRNA(Gln) + L-glutamine + ATP + H2O = L-glutaminyl-tRNA(Gln) + L-glutamate + ADP + phosphate + H(+). Functionally, allows the formation of correctly charged Gln-tRNA(Gln) through the transamidation of misacylated Glu-tRNA(Gln) in the mitochondria. The reaction takes place in the presence of glutamine and ATP through an activated gamma-phospho-Glu-tRNA(Gln). The polypeptide is Glutamyl-tRNA(Gln) amidotransferase subunit B, mitochondrial (Ajellomyces dermatitidis (strain ER-3 / ATCC MYA-2586) (Blastomyces dermatitidis)).